A 107-amino-acid chain; its full sequence is Nucleoid-associated protein Mmar10_0436 (107 aa).

The protein belongs to the YbaB/EbfC family. In terms of assembly, homodimer.

It localises to the cytoplasm. The protein resides in the nucleoid. Functionally, binds to DNA and alters its conformation. May be involved in regulation of gene expression, nucleoid organization and DNA protection. This Maricaulis maris (strain MCS10) (Caulobacter maris) protein is Nucleoid-associated protein Mmar10_0436.